The chain runs to 226 residues: Putative ABC transporter ATP-binding protein DR_2469 (226 aa).

In terms of domain architecture, ABC transporter spans 2–225 (IELRHVSHHY…LRVYRERMTW (224 aa)). 33 to 40 (GSNGSGKS) contacts ATP.

The protein belongs to the ABC transporter superfamily.

Its subcellular location is the cell membrane. Probably part of an ABC transporter complex. Responsible for energy coupling to the transport system. The sequence is that of Putative ABC transporter ATP-binding protein DR_2469 from Deinococcus radiodurans (strain ATCC 13939 / DSM 20539 / JCM 16871 / CCUG 27074 / LMG 4051 / NBRC 15346 / NCIMB 9279 / VKM B-1422 / R1).